The primary structure comprises 493 residues: Glutamyl-tRNA(Gln) amidotransferase subunit A (493 aa).

Residues K81 and S156 each act as charge relay system in the active site. The active-site Acyl-ester intermediate is S180.

The protein belongs to the amidase family. GatA subfamily. As to quaternary structure, heterotrimer of A, B and C subunits.

The enzyme catalyses L-glutamyl-tRNA(Gln) + L-glutamine + ATP + H2O = L-glutaminyl-tRNA(Gln) + L-glutamate + ADP + phosphate + H(+). Functionally, allows the formation of correctly charged Gln-tRNA(Gln) through the transamidation of misacylated Glu-tRNA(Gln) in organisms which lack glutaminyl-tRNA synthetase. The reaction takes place in the presence of glutamine and ATP through an activated gamma-phospho-Glu-tRNA(Gln). The sequence is that of Glutamyl-tRNA(Gln) amidotransferase subunit A from Mycobacterium avium (strain 104).